Reading from the N-terminus, the 506-residue chain is Anaerobic nitric oxide reductase transcription regulator NorR (506 aa).

Position 57 is a 4-aspartylphosphate (Asp-57). The Sigma-54 factor interaction domain occupies 187-416; it reads MIGLSPAMTQ…LEHAIHRAVV (230 aa). ATP contacts are provided by residues 215–222 and 278–287; these read GETGTGKE and ADNGTLFLDE. The H-T-H motif DNA-binding region spans 481-500; it reads WAASARALETDVANLHRLAK.

Its pathway is nitrogen metabolism; nitric oxide reduction. Required for the expression of anaerobic nitric oxide (NO) reductase, acts as a transcriptional activator for at least the norVW operon. Activation also requires sigma-54. In Salmonella choleraesuis (strain SC-B67), this protein is Anaerobic nitric oxide reductase transcription regulator NorR.